The sequence spans 556 residues: MSPTTAGIAFLASLVAAVVLVHVPLGDYMYRVYTSEKDSRAERLIYRVIGADPRAEQSWGSYARSVLAFSAVSIVFLFGLQLVQGRLPLHLHDPATPMTPALAWNTAVSFVTNTNWQAYAGESTQGHLVQMAGLAVQNFVSAAVGMAVAIALVRGFARRHTGELGNFWVDLVRGNLRILLPLAIVGALLLVAGGAIQNFALHEQVVTTLSGAAQTIPGGPVAGQEAIKELGTNGGGFFNVNSAHPFENPTPWTNWLENFLILLIPFSLPRTFGRMVGSARQGVAIAAIMGAIALASVSLTMLLQLQHHGTVPTAVGAAMEGVEQRFGVADSAVFAGSTTLTSTGAVNSFHDSYTSLGGLMTMFNMQLGEIGPGGVGSGLYGMLILAIITVFVAGLMVGRTPEYLGKKITPREIKLAASYFLATPLIVLTGSAIAMAMPGQRAGMLNTGPHGLSEVLYAFTSTANNNGSAFAGISVNTEWYNTALGLAMVFGRLLPIILVLALAGSLASQGVTPSSVGTLPTHRPQFVGMTVGVTLILVALTFLPILALGPLAEGIH.

A run of 10 helical transmembrane segments spans residues 6–26 (AGIA…VPLG), 65–85 (SVLA…LVQG), 133–153 (GLAV…IALV), 176–196 (LRIL…GGAI), 249–269 (PTPW…FSLP), 283–303 (VAIA…TMLL), 378–398 (GLYG…LMVG), 415–435 (LAAS…AIAM), 483–503 (ALGL…LALA), and 526–546 (FVGM…LPIL).

Belongs to the KdpA family. The system is composed of three essential subunits: KdpA, KdpB and KdpC.

Its subcellular location is the cell membrane. In terms of biological role, part of the high-affinity ATP-driven potassium transport (or Kdp) system, which catalyzes the hydrolysis of ATP coupled with the electrogenic transport of potassium into the cytoplasm. This subunit binds the extracellular potassium ions and delivers the ions to the membrane domain of KdpB through an intramembrane tunnel. The polypeptide is Potassium-transporting ATPase potassium-binding subunit (Mycolicibacterium smegmatis (strain ATCC 700084 / mc(2)155) (Mycobacterium smegmatis)).